The following is a 385-amino-acid chain: Heat-inducible transcription repressor HrcA (385 aa).

The protein belongs to the HrcA family.

In terms of biological role, negative regulator of class I heat shock genes (grpE-dnaK-dnaJ and groELS operons). Prevents heat-shock induction of these operons. This Protochlamydia amoebophila (strain UWE25) protein is Heat-inducible transcription repressor HrcA.